A 323-amino-acid polypeptide reads, in one-letter code: Lipoyl synthase (323 aa).

Residues 1–27 (MVTILDRTSSDEKRIRHPEKAHRPDTE) form a disordered region. [4Fe-4S] cluster contacts are provided by Cys-61, Cys-66, Cys-72, Cys-87, Cys-91, Cys-94, and Ser-300. The Radical SAM core domain maps to 73–289 (WEKKHATFMI…ETVAYAKGFL (217 aa)).

This sequence belongs to the radical SAM superfamily. Lipoyl synthase family. [4Fe-4S] cluster serves as cofactor.

It localises to the cytoplasm. It carries out the reaction [[Fe-S] cluster scaffold protein carrying a second [4Fe-4S](2+) cluster] + N(6)-octanoyl-L-lysyl-[protein] + 2 oxidized [2Fe-2S]-[ferredoxin] + 2 S-adenosyl-L-methionine + 4 H(+) = [[Fe-S] cluster scaffold protein] + N(6)-[(R)-dihydrolipoyl]-L-lysyl-[protein] + 4 Fe(3+) + 2 hydrogen sulfide + 2 5'-deoxyadenosine + 2 L-methionine + 2 reduced [2Fe-2S]-[ferredoxin]. The protein operates within protein modification; protein lipoylation via endogenous pathway; protein N(6)-(lipoyl)lysine from octanoyl-[acyl-carrier-protein]: step 2/2. In terms of biological role, catalyzes the radical-mediated insertion of two sulfur atoms into the C-6 and C-8 positions of the octanoyl moiety bound to the lipoyl domains of lipoate-dependent enzymes, thereby converting the octanoylated domains into lipoylated derivatives. This chain is Lipoyl synthase, found in Agrobacterium fabrum (strain C58 / ATCC 33970) (Agrobacterium tumefaciens (strain C58)).